The following is a 1088-amino-acid chain: MGKYNLILSEYLSFIYNSQSAVQIPIYYSSNSDLEKRCIEFHSKCLENSKKGLSLKNIFVEYKDVVENATLLSILSYSYDKYNAVERKLVYYAKGKPLEADLSANKLDYENNKLTSDLFPTAEEYTDSLMDPAILTSLSSNLNAVMFWLEKHANDTAEKAKIYKRRLDLFTIVASTVNKYGVPRHNAKYRYEYEVMKDKPYYLVTWANSSIEMLMSVFSHEDYLIAKELIVLSYSNRSTLAKLVSSPMSILVALVDINGTFITNEELELEFSNKYVKAIVPDQTFEELKEMLDNMKKAGLVDIPKMIQDWLVDCSIEKFPLMAKIYSWSFHVGFRKQKMLDAALDQLKTEYTEDVDDEMYREYTMLIRDEVVKMLEEAVKHDDHLLQDSELAGLLSMSSASNGESRQLKFGRKTIFSTKKNMHVMDDMANGRYTPGVIPPVNVDKPIPLGRRDVPGRRTRIIFILPYEYFIAQHAVVEKMLLYAKHTREYAEFYSQSNQLLSYGDVTRFLSNNAMVLYTDVSQWDSSQHNTQPFRKGIIMGLDILANMTNDAKVIQTLHLYKQTQINLMDSYVQIPDGNVIKKIQYGAVASGEKQTKAANSIANLALIKTVLSRIANKYSFVTKIIRVDGDDNYAVLQFNTEVTKQMVQDVSNDVRDTYARMNAKVKALVSTVGIEIAKRYIAGGKIFFRAGINLLNNEKRGQSTQWDQAAVLYSNYIVNRLRGFETDREFILTKIMQMTSVAITGSLRLFPSERVLTTNSTFKVFDSEDFIIEYGTTDDEVYIQRAFMSLSSQKSGIADEIAASQTFKNYVSKLSDQLLVSKNTIVSRGIALTEKAKLNSYAPISLEKRRAQISALLTMLQKPVTFKSNKITINDILHDIKPYFVTSEANLPMQYQKFMPTLPNNVQYIIQCIGSRTYQIEDDGSKSAISKLISKYSVYRPSIEELYKVISLHEQEIQLYLVSLGIPKIDADTYVGSKIYSQDKYRILESYVYNLLSINYGCYQLFDFNSPDLEKLIRIPFKGKIPAVTFILHLYAKLEIINYAIKNGSWISLFCNYPKSEMIKLWKKMWNITSLRSPYTNANFFQD.

Positions 501–687 constitute a RdRp catalytic domain; that stretch reads LSYGDVTRFL…AKRYIAGGKI (187 aa).

This sequence belongs to the reoviridae RNA-directed RNA polymerase family. In terms of assembly, interacts with VP3 (Potential). Interacts with VP2; this interaction activates VP1. Interacts with NSP5; this interaction is probably necessary for the formation of functional virus factories. Interacts with NSP2; this interaction is weak. It depends on Mg(2+) as a cofactor.

The protein resides in the virion. The enzyme catalyses RNA(n) + a ribonucleoside 5'-triphosphate = RNA(n+1) + diphosphate. RNA-directed RNA polymerase that is involved in both transcription and genome replication. Together with VP3 capping enzyme, forms an enzyme complex positioned near the channels situated at each of the five-fold vertices of the core. Following infection, the outermost layer of the virus is lost, leaving a double-layered particle (DLP) made up of the core and VP6 shell. VP1 then catalyzes the transcription of fully conservative plus-strand genomic RNAs that are extruded through the DLP's channels into the cytoplasm where they function as mRNAs for translation of viral proteins. One copy of each of the viral (+)RNAs is also recruited during core assembly, together with newly synthesized polymerase complexes and VP2. The polymerase of these novo-formed particles catalyzes the synthesis of complementary minus-strands leading to dsRNA formation. To do so, the polymerase specifically recognizes and binds 4 bases 5'-UGUG-3' in the conserved 3'-sequence of plus-strand RNA templates. VP2 presumably activates the autoinhibited VP1-RNA complex to coordinate packaging and genome replication. Once dsRNA synthesis is complete, the polymerase switches to the transcriptional mode, thus providing secondary transcription. This chain is RNA-directed RNA polymerase, found in Macaca mulatta (Rhesus macaque).